The chain runs to 655 residues: ATP-dependent zinc metalloprotease FtsH (655 aa).

The Cytoplasmic segment spans residues Met-1–Lys-17. The chain crosses the membrane as a helical span at residues Arg-18 to Leu-38. The Lumenal portion of the chain corresponds to Arg-39–Leu-124. Residues Pro-125–Ile-145 form a helical membrane-spanning segment. The Cytoplasmic segment spans residues Asn-146–Asn-655. Gly-216–Thr-223 contributes to the ATP binding site. His-440 contributes to the Zn(2+) binding site. Glu-441 is a catalytic residue. His-444 and Asp-517 together coordinate Zn(2+).

In the central section; belongs to the AAA ATPase family. The protein in the C-terminal section; belongs to the peptidase M41 family. As to quaternary structure, homohexamer. It depends on Zn(2+) as a cofactor.

The protein resides in the cellular thylakoid membrane. Functionally, acts as a processive, ATP-dependent zinc metallopeptidase for both cytoplasmic and membrane proteins. Plays a role in the quality control of integral membrane proteins. The chain is ATP-dependent zinc metalloprotease FtsH from Acaryochloris marina (strain MBIC 11017).